A 371-amino-acid chain; its full sequence is Alanine racemase (371 aa).

The active-site Proton acceptor; specific for D-alanine is Lys39. Lys39 is subject to N6-(pyridoxal phosphate)lysine. Position 137 (Arg137) interacts with substrate. Tyr266 acts as the Proton acceptor; specific for L-alanine in catalysis. A substrate-binding site is contributed by Met314.

Belongs to the alanine racemase family. Pyridoxal 5'-phosphate serves as cofactor.

The catalysed reaction is L-alanine = D-alanine. The protein operates within amino-acid biosynthesis; D-alanine biosynthesis; D-alanine from L-alanine: step 1/1. Its function is as follows. Catalyzes the interconversion of L-alanine and D-alanine. May also act on other amino acids. The chain is Alanine racemase (alr) from Desulfovibrio desulfuricans (strain ATCC 27774 / DSM 6949 / MB).